A 124-amino-acid polypeptide reads, in one-letter code: Small ribosomal subunit protein uS12 (124 aa).

The interval 9–28 (RTERQTLSRKTKSPALRSCP) is disordered. The residue at position 89 (Asp89) is a 3-methylthioaspartic acid. The disordered stretch occupies residues 104–124 (TAGVKDRRQSRSKYGAKAPKE).

This sequence belongs to the universal ribosomal protein uS12 family. Part of the 30S ribosomal subunit. Contacts proteins S8 and S17. May interact with IF1 in the 30S initiation complex.

Functionally, with S4 and S5 plays an important role in translational accuracy. Its function is as follows. Interacts with and stabilizes bases of the 16S rRNA that are involved in tRNA selection in the A site and with the mRNA backbone. Located at the interface of the 30S and 50S subunits, it traverses the body of the 30S subunit contacting proteins on the other side and probably holding the rRNA structure together. The combined cluster of proteins S8, S12 and S17 appears to hold together the shoulder and platform of the 30S subunit. In Synechococcus sp. (strain RCC307), this protein is Small ribosomal subunit protein uS12.